A 249-amino-acid chain; its full sequence is 1-(5-phosphoribosyl)-5-[(5-phosphoribosylamino)methylideneamino] imidazole-4-carboxamide isomerase (249 aa).

Asp-11 functions as the Proton acceptor in the catalytic mechanism. Residue Asp-133 is the Proton donor of the active site.

The protein belongs to the HisA/HisF family.

Its subcellular location is the cytoplasm. It catalyses the reaction 1-(5-phospho-beta-D-ribosyl)-5-[(5-phospho-beta-D-ribosylamino)methylideneamino]imidazole-4-carboxamide = 5-[(5-phospho-1-deoxy-D-ribulos-1-ylimino)methylamino]-1-(5-phospho-beta-D-ribosyl)imidazole-4-carboxamide. It participates in amino-acid biosynthesis; L-histidine biosynthesis; L-histidine from 5-phospho-alpha-D-ribose 1-diphosphate: step 4/9. This Actinobacillus succinogenes (strain ATCC 55618 / DSM 22257 / CCUG 43843 / 130Z) protein is 1-(5-phosphoribosyl)-5-[(5-phosphoribosylamino)methylideneamino] imidazole-4-carboxamide isomerase.